A 330-amino-acid polypeptide reads, in one-letter code: Aspartate--ammonia ligase (330 aa).

This sequence belongs to the class-II aminoacyl-tRNA synthetase family. AsnA subfamily. As to quaternary structure, homodimer.

Its subcellular location is the cytoplasm. The enzyme catalyses L-aspartate + NH4(+) + ATP = L-asparagine + AMP + diphosphate + H(+). The protein operates within amino-acid biosynthesis; L-asparagine biosynthesis; L-asparagine from L-aspartate (ammonia route): step 1/1. This chain is Aspartate--ammonia ligase, found in Salmonella typhi.